Reading from the N-terminus, the 366-residue chain is Chorismate synthase (366 aa).

2 residues coordinate NADP(+): Arg48 and Arg54. FMN-binding positions include 125–127, 238–239, Gly278, 293–297, and Arg319; these read RSS, NA, and KPTSS.

This sequence belongs to the chorismate synthase family. In terms of assembly, homotetramer. Requires FMNH2 as cofactor.

The enzyme catalyses 5-O-(1-carboxyvinyl)-3-phosphoshikimate = chorismate + phosphate. It participates in metabolic intermediate biosynthesis; chorismate biosynthesis; chorismate from D-erythrose 4-phosphate and phosphoenolpyruvate: step 7/7. Catalyzes the anti-1,4-elimination of the C-3 phosphate and the C-6 proR hydrogen from 5-enolpyruvylshikimate-3-phosphate (EPSP) to yield chorismate, which is the branch point compound that serves as the starting substrate for the three terminal pathways of aromatic amino acid biosynthesis. This reaction introduces a second double bond into the aromatic ring system. The polypeptide is Chorismate synthase (Cellvibrio japonicus (strain Ueda107) (Pseudomonas fluorescens subsp. cellulosa)).